Here is a 952-residue protein sequence, read N- to C-terminus: MSWLHKFFDLFLGESEEDAERETKPAQIPQQQEVHHPEGQLKRLEDPKIYYEYPKGKFRFPVVPDGYKNHDLRRRRTPSDEPKSAPRPSAAPYRERPRNEEEQHTYQAAEPAKKPFKPTNIPSPVYGFNQKPSVKKDVPKKPSETLNEPDKSVKEKVTLLSEEIERERGYPASDTQAHSKIESPFFPDTQFEKQPSGVLNRKDTEHDEALAKRPAEPSGNKVPFESGVQQPEKEEPFFPAEQAEEQTPPEMLTDTAAEGLSDSEVGREEPATAEEEQREQQPEKFEEPVFSAELDEEQTAPESQTEAVSEDEKAKEPSDSPVYNHHENAAEGAESPFVQEEQMDIRQEEPLFTDHEYSSEALAQAETVAKESEEPSESIINNHYDTLGEAQETKIDVQPDSHTELEKTEHMEQGSKSSTATLENRQEIRADKPREASEEPKKRPGVQEKRTEQSASSQKGPSVPFNVMMLKRDTHKQQKAEERRGSYVFPNVALLDVPPAQVQDDTAWIEEQRQLLDLTLKNFNVRANVVHVTQGPSVTRFEVHPEPGVKVNKITNLSDDIKLSLSAKDIRIEAPIPGKNTIGIEVPNRTSKVVDLRQMIRSSAFRTSKSPLTAALGLDISGNPVVIDLKKMPHGLIAGATGSGKSVCINTILVSLLYKADPSEVKVLLIDPKMVELAPYNKIPHLVSPVITDAKAATAALKWVVEEMERRYELFAHSGVRDIDRFNQLTAEHQMGEKLPYLVVIIDELADLMMVAPNDVEESIARIAQKARACGIHLLVATQRPSVDVITGLIKANIPTRIAFSVSSQVDSRTIIDIAGAEKLLGKGDMLFLENGSGKPVRLQGNFVSDREIDRVVSHVRSQMPPTYLFEQEELVRQGSALKEEDELFYEACEFVVEQNSASTSSLQRRFRIGYNRAARLIDMMEAEGMISEAKGSKPREVLITASDLINE.

The interval 15–468 (SEEDAERETK…KGPSVPFNVM (454 aa)) is disordered. Composition is skewed to basic and acidic residues over residues 33-49 (EVHH…DPKI), 93-104 (YRERPRNEEEQH), 134-169 (VKKD…RERG), and 200-215 (NRKD…KRPA). The span at 237–250 (FFPAEQAEEQTPPE) shows a compositional bias: low complexity. 4 stretches are compositionally biased toward basic and acidic residues: residues 278–287 (REQQPEKFEE), 310–329 (EDEK…HENA), 343–358 (MDIR…HEYS), and 391–413 (QETK…HMEQ). The span at 414–423 (GSKSSTATLE) shows a compositional bias: polar residues. Basic and acidic residues predominate over residues 424–452 (NRQEIRADKPREASEEPKKRPGVQEKRTE). Residues 622-813 (GNPVVIDLKK…FSVSSQVDSR (192 aa)) form the FtsK domain. 639 to 646 (GATGSGKS) contributes to the ATP binding site.

This sequence belongs to the FtsK/SpoIIIE/SftA family. As to quaternary structure, homohexamer.

It is found in the cytoplasm. Required for the accurate completion of chromosome partitioning, in part by promoting efficient resolution of chromosome dimers, before the formation of the division septum. Binds to DNA in a non-specific manner. Shows ATPase activity. Not required for cytokinesis. This Bacillus subtilis (strain 168) protein is DNA translocase SftA (sftA).